Consider the following 901-residue polypeptide: Protein translocase subunit SecA (901 aa).

ATP is bound by residues Q85, G103 to T107, and D510. Positions T847–Q901 are disordered. The span at R848 to S866 shows a compositional bias: polar residues. Residues C882, C884, C893, and H894 each coordinate Zn(2+). Over residues K888–Q901 the composition is skewed to basic residues.

The protein belongs to the SecA family. In terms of assembly, monomer and homodimer. Part of the essential Sec protein translocation apparatus which comprises SecA, SecYEG and auxiliary proteins SecDF-YajC and YidC. Zn(2+) is required as a cofactor.

The protein resides in the cell inner membrane. It localises to the cytoplasm. It carries out the reaction ATP + H2O + cellular proteinSide 1 = ADP + phosphate + cellular proteinSide 2.. Part of the Sec protein translocase complex. Interacts with the SecYEG preprotein conducting channel. Has a central role in coupling the hydrolysis of ATP to the transfer of proteins into and across the cell membrane, serving both as a receptor for the preprotein-SecB complex and as an ATP-driven molecular motor driving the stepwise translocation of polypeptide chains across the membrane. This chain is Protein translocase subunit SecA, found in Haemophilus influenzae (strain PittGG).